The following is a 191-amino-acid chain: MIRGVRGTLVAKRSGEVLVDVQGVTFRVQTSATTLQELGEPGDLVSLVTHLIVREDELALYGFATEAELELFLSLLAVSGVGPRGALNLLSLAAPDRLTEWIRGERIEELARAPGIGKKTASRIVLELRGRLPALTEVQAGEPIDQELVAALQALGYTAQEARQAATHPEVRRAPSLEERIVAALRQLAPP.

Residues 1–64 (MIRGVRGTLV…EDELALYGFA (64 aa)) form a domain I region. Residues 65–136 (TEAELELFLS…ELRGRLPALT (72 aa)) form a domain II region. Residues 136–139 (TEVQ) form a flexible linker region. The domain III stretch occupies residues 140 to 191 (AGEPIDQELVAALQALGYTAQEARQAATHPEVRRAPSLEERIVAALRQLAPP).

It belongs to the RuvA family. As to quaternary structure, homotetramer. Forms an RuvA(8)-RuvB(12)-Holliday junction (HJ) complex. HJ DNA is sandwiched between 2 RuvA tetramers; dsDNA enters through RuvA and exits via RuvB. An RuvB hexamer assembles on each DNA strand where it exits the tetramer. Each RuvB hexamer is contacted by two RuvA subunits (via domain III) on 2 adjacent RuvB subunits; this complex drives branch migration. In the full resolvosome a probable DNA-RuvA(4)-RuvB(12)-RuvC(2) complex forms which resolves the HJ.

It is found in the cytoplasm. Its function is as follows. The RuvA-RuvB-RuvC complex processes Holliday junction (HJ) DNA during genetic recombination and DNA repair, while the RuvA-RuvB complex plays an important role in the rescue of blocked DNA replication forks via replication fork reversal (RFR). RuvA specifically binds to HJ cruciform DNA, conferring on it an open structure. The RuvB hexamer acts as an ATP-dependent pump, pulling dsDNA into and through the RuvAB complex. HJ branch migration allows RuvC to scan DNA until it finds its consensus sequence, where it cleaves and resolves the cruciform DNA. The protein is Holliday junction branch migration complex subunit RuvA of Thermomicrobium roseum (strain ATCC 27502 / DSM 5159 / P-2).